A 428-amino-acid polypeptide reads, in one-letter code: Tol-Pal system protein TolB (428 aa).

Residues 1-24 (MPSLKTLLRGVLVAAMLVAGSARA) form the signal peptide.

Belongs to the TolB family. In terms of assembly, the Tol-Pal system is composed of five core proteins: the inner membrane proteins TolA, TolQ and TolR, the periplasmic protein TolB and the outer membrane protein Pal. They form a network linking the inner and outer membranes and the peptidoglycan layer.

Its subcellular location is the periplasm. In terms of biological role, part of the Tol-Pal system, which plays a role in outer membrane invagination during cell division and is important for maintaining outer membrane integrity. This Chromobacterium violaceum (strain ATCC 12472 / DSM 30191 / JCM 1249 / CCUG 213 / NBRC 12614 / NCIMB 9131 / NCTC 9757 / MK) protein is Tol-Pal system protein TolB.